Here is a 98-residue protein sequence, read N- to C-terminus: Aspartyl/glutamyl-tRNA(Asn/Gln) amidotransferase subunit C (98 aa).

Residues 75-98 (EQALSGAPDSDDNRFKVPAILDEA) form a disordered region.

This sequence belongs to the GatC family. Heterotrimer of A, B and C subunits.

The enzyme catalyses L-glutamyl-tRNA(Gln) + L-glutamine + ATP + H2O = L-glutaminyl-tRNA(Gln) + L-glutamate + ADP + phosphate + H(+). It catalyses the reaction L-aspartyl-tRNA(Asn) + L-glutamine + ATP + H2O = L-asparaginyl-tRNA(Asn) + L-glutamate + ADP + phosphate + 2 H(+). Allows the formation of correctly charged Asn-tRNA(Asn) or Gln-tRNA(Gln) through the transamidation of misacylated Asp-tRNA(Asn) or Glu-tRNA(Gln) in organisms which lack either or both of asparaginyl-tRNA or glutaminyl-tRNA synthetases. The reaction takes place in the presence of glutamine and ATP through an activated phospho-Asp-tRNA(Asn) or phospho-Glu-tRNA(Gln). The sequence is that of Aspartyl/glutamyl-tRNA(Asn/Gln) amidotransferase subunit C from Pseudarthrobacter chlorophenolicus (strain ATCC 700700 / DSM 12829 / CIP 107037 / JCM 12360 / KCTC 9906 / NCIMB 13794 / A6) (Arthrobacter chlorophenolicus).